Reading from the N-terminus, the 509-residue chain is DNA nucleotidylexotransferase (509 aa).

Residues 1–25 (MDPLCTASSGPRKKRPRQVGASMAS) form a disordered region. A Nuclear localization signal motif is present at residues 11-17 (PRKKRPR). The BRCT domain maps to 27–124 (PHDIKFQNLV…KPVEITGKHQ (98 aa)). Positions 151–509 (SQYACQRKTT…DYIEPWERNA (359 aa)) are mediates interaction with DNTTIP2. Residues 258–262 (VGLKT) form an involved in DNA binding region. A 2'-deoxyribonucleoside 5'-triphosphate is bound by residues 333 to 338 (GFRRGK) and 342 to 345 (HDVD). The Mg(2+) site is built by Asp343, Asp345, and Asp433. 448–449 (GW) lines the a 2'-deoxyribonucleoside 5'-triphosphate pocket.

The protein belongs to the DNA polymerase type-X family. As to quaternary structure, interacts with PRP19 and DNTTIP1. Forms a ternary complex with DNTTIP2 and core histone. Released from this complex by PCNA. Interacts with TRERF1. Requires Mg(2+) as cofactor.

It is found in the nucleus. The catalysed reaction is DNA(n) + a 2'-deoxyribonucleoside 5'-triphosphate = DNA(n+1) + diphosphate. Functionally, template-independent DNA polymerase which catalyzes the random addition of deoxynucleoside 5'-triphosphate to the 3'-end of a DNA initiator. One of the in vivo functions of this enzyme is the addition of nucleotides at the junction (N region) of rearranged Ig heavy chain and T-cell receptor gene segments during the maturation of B- and T-cells. The sequence is that of DNA nucleotidylexotransferase (DNTT) from Bos taurus (Bovine).